Here is a 210-residue protein sequence, read N- to C-terminus: Urease accessory protein UreG (210 aa).

14–21 (GPVGSGKT) provides a ligand contact to GTP.

The protein belongs to the SIMIBI class G3E GTPase family. UreG subfamily. As to quaternary structure, homodimer. UreD, UreF and UreG form a complex that acts as a GTP-hydrolysis-dependent molecular chaperone, activating the urease apoprotein by helping to assemble the nickel containing metallocenter of UreC. The UreE protein probably delivers the nickel.

It is found in the cytoplasm. In terms of biological role, facilitates the functional incorporation of the urease nickel metallocenter. This process requires GTP hydrolysis, probably effectuated by UreG. This is Urease accessory protein UreG from Rhodopseudomonas palustris (strain BisA53).